The primary structure comprises 218 residues: Probable transaldolase (218 aa).

Lysine 87 serves as the catalytic Schiff-base intermediate with substrate.

This sequence belongs to the transaldolase family. Type 3B subfamily.

The protein localises to the cytoplasm. The catalysed reaction is D-sedoheptulose 7-phosphate + D-glyceraldehyde 3-phosphate = D-erythrose 4-phosphate + beta-D-fructose 6-phosphate. It functions in the pathway carbohydrate degradation; pentose phosphate pathway; D-glyceraldehyde 3-phosphate and beta-D-fructose 6-phosphate from D-ribose 5-phosphate and D-xylulose 5-phosphate (non-oxidative stage): step 2/3. In terms of biological role, transaldolase is important for the balance of metabolites in the pentose-phosphate pathway. This is Probable transaldolase from Bacteroides fragilis (strain YCH46).